The sequence spans 122 residues: Putative iron-sulfur cluster insertion protein ErpA (122 aa).

Residues Cys-50, Cys-114, and Cys-116 each contribute to the iron-sulfur cluster site.

The protein belongs to the HesB/IscA family. In terms of assembly, homodimer. Requires iron-sulfur cluster as cofactor.

Required for insertion of 4Fe-4S clusters. The polypeptide is Putative iron-sulfur cluster insertion protein ErpA (Bordetella petrii (strain ATCC BAA-461 / DSM 12804 / CCUG 43448)).